A 55-amino-acid chain; its full sequence is ATP synthase F(0) complex subunit 8 (55 aa).

A helical membrane pass occupies residues L4–I24. Residues T32 to S41 show a composition bias toward polar residues. The interval T32–Q55 is disordered.

This sequence belongs to the ATPase protein 8 family. In terms of assembly, component of the ATP synthase complex composed at least of ATP5F1A/subunit alpha, ATP5F1B/subunit beta, ATP5MC1/subunit c (homooctomer), MT-ATP6/subunit a, MT-ATP8/subunit 8, ATP5ME/subunit e, ATP5MF/subunit f, ATP5MG/subunit g, ATP5MK/subunit k, ATP5MJ/subunit j, ATP5F1C/subunit gamma, ATP5F1D/subunit delta, ATP5F1E/subunit epsilon, ATP5PF/subunit F6, ATP5PB/subunit b, ATP5PD/subunit d, ATP5PO/subunit OSCP. ATP synthase complex consists of a soluble F(1) head domain (subunits alpha(3) and beta(3)) - the catalytic core - and a membrane F(0) domain - the membrane proton channel (subunits c, a, 8, e, f, g, k and j). These two domains are linked by a central stalk (subunits gamma, delta, and epsilon) rotating inside the F1 region and a stationary peripheral stalk (subunits F6, b, d, and OSCP).

It localises to the mitochondrion membrane. Its function is as follows. Subunit 8, of the mitochondrial membrane ATP synthase complex (F(1)F(0) ATP synthase or Complex V) that produces ATP from ADP in the presence of a proton gradient across the membrane which is generated by electron transport complexes of the respiratory chain. ATP synthase complex consist of a soluble F(1) head domain - the catalytic core - and a membrane F(1) domain - the membrane proton channel. These two domains are linked by a central stalk rotating inside the F(1) region and a stationary peripheral stalk. During catalysis, ATP synthesis in the catalytic domain of F(1) is coupled via a rotary mechanism of the central stalk subunits to proton translocation. In vivo, can only synthesize ATP although its ATP hydrolase activity can be activated artificially in vitro. Part of the complex F(0) domain. This is ATP synthase F(0) complex subunit 8 from Formosania lacustris (Oriental stream loach).